The chain runs to 180 residues: ATP synthase subunit delta, chloroplastic (180 aa).

The protein belongs to the ATPase delta chain family. In terms of assembly, F-type ATPases have 2 components, F(1) - the catalytic core - and F(0) - the membrane proton channel. F(1) has five subunits: alpha(3), beta(3), gamma(1), delta(1), epsilon(1). CF(0) has four main subunits: a(1), b(1), b'(1) and c(10-14). The alpha and beta chains form an alternating ring which encloses part of the gamma chain. F(1) is attached to F(0) by a central stalk formed by the gamma and epsilon chains, while a peripheral stalk is formed by the delta, b and b' chains.

It is found in the plastid. The protein resides in the chloroplast thylakoid membrane. In terms of biological role, f(1)F(0) ATP synthase produces ATP from ADP in the presence of a proton or sodium gradient. F-type ATPases consist of two structural domains, F(1) containing the extramembraneous catalytic core and F(0) containing the membrane proton channel, linked together by a central stalk and a peripheral stalk. During catalysis, ATP synthesis in the catalytic domain of F(1) is coupled via a rotary mechanism of the central stalk subunits to proton translocation. Functionally, this protein is part of the stalk that links CF(0) to CF(1). It either transmits conformational changes from CF(0) to CF(1) or is implicated in proton conduction. This Emiliania huxleyi (Coccolithophore) protein is ATP synthase subunit delta, chloroplastic.